Here is a 339-residue protein sequence, read N- to C-terminus: Protein-glutamate methylesterase/protein-glutamine glutaminase (339 aa).

Residues 2–119 (RIGVVNDMPM…EGNASSQSAR (118 aa)) form the Response regulatory domain. Asp53 bears the 4-aspartylphosphate mark. The CheB-type methylesterase domain occupies 149 to 338 (PTPRRLIAIG…SRIIEACERS (190 aa)). Residues Ser160, His187, and Asp280 contribute to the active site.

This sequence belongs to the CheB family. Post-translationally, phosphorylated by CheA. Phosphorylation of the N-terminal regulatory domain activates the methylesterase activity.

The protein resides in the cytoplasm. It carries out the reaction [protein]-L-glutamate 5-O-methyl ester + H2O = L-glutamyl-[protein] + methanol + H(+). It catalyses the reaction L-glutaminyl-[protein] + H2O = L-glutamyl-[protein] + NH4(+). Functionally, involved in chemotaxis. Part of a chemotaxis signal transduction system that modulates chemotaxis in response to various stimuli. Catalyzes the demethylation of specific methylglutamate residues introduced into the chemoreceptors (methyl-accepting chemotaxis proteins or MCP) by CheR. Also mediates the irreversible deamidation of specific glutamine residues to glutamic acid. In Mesorhizobium japonicum (strain LMG 29417 / CECT 9101 / MAFF 303099) (Mesorhizobium loti (strain MAFF 303099)), this protein is Protein-glutamate methylesterase/protein-glutamine glutaminase.